The chain runs to 1939 residues: MSSDAEMAVFGEAAPYLRKSEKERIEAQNKPFDAKSSVFVVDAKESYVKATVQSREGGKVTAKTEGGATVTVKDDQVFSMNPPKYDKIEDMAMMTHLHEPAVLYNLKERYAAWMIYTYSGLFCVTVNPYKWLPVYNPEVVAAYRGKKRQEAPPHIFSISDNAYQFMLTDRENQSILITGESGAGKTVNTKRVIQYFATIAVTGDKKKEEATSGKMQGTLEDQIISANPLLEAFGNAKTVRNDNSSRFGKFIRIHFGATGKLASADIETYLLEKSRVTFQLKAERSYHIFYQIMSNKKPELIEMLLITTNPYDFAYVSQGEITVPSIDDQEELMATDTAVDILGFSADEKVAIYKLTGAVMHYGNMKFKQKQREEQAEPDGTEVADKAAYLTSLNSADLLKALCYPRVKVGNEYVTKGQTVQQVYNSVGALAKSMYEKMFLWMVTRINQQLDTKQPRQYFIGVLDIAGFEIFDFNTLEQLCINFTNEKLQQFFNHHMFVLEQEEYKKEGIDWEFIDFGMDLAACIELIEKPMGIFSILEEECMFPKATDTSFKNKLYEQHLGKSNNFQKPKPAKGKAEAHFSLVHYAGTVDYNIIGWLDKNKDPLNETVVGLYQKSGLKTLAFLFSGGQAAEAEGGGGKKGGKKKGSSFQTVSALFRENLNKLMTNLKSTHPHFVRCLIPNETKTPGAMEHELVLHQLRCNGVLEGIRICRKGFPSRILYADFKQRYKVLNASAIPEGQFIDSKKASEKLLGSIDIDHTQYKFGHTKVFFKAGLLGTLEEMRDEKLAQLITRTQAVCRGYLMRVEFKKMMERRESIFCIQYNVRAFMNVKHWPWMKLYFKIKPLLKSAETEKEMANMKEDFEKAKEDLAKSEAKRKELEEKMVALMQEKNDLQLQVQAEADGLADAEERCDQLIKTKIQLEAKIKELTERAEDEEEINAELTAKKRKLEDECSELKKDIDDLELTLAKVEKEKHATENKVKNLTEEMAGLDENIAKLTKEKKALQEAHQQTLDDLQAEEDKVNTLTKAKTKLEQQVDDLEGSLEQEKKLRMDLERAKRKLEGDLKLAQESTMDIENDKQQLDEKLKKKEFEMSNLQSKIEDEQALGMQLQKKIKELQARIEELEEEIEAERASRAKAEKQRSDLSRELEEISERLEEAGGATSAQIEMNKKREAEFQKMRRDLEEATLQHEATAAALRKKHADSVAELGEQIDNLQRVKQKLEKEKSELKMEIDDLASNMETVSKAKGNLEKMCRTLEDQLSEVKTKEEEQQRLINELSTQKARLHTESGEFSRQLDEKDAMVSQLSRGKQAFTQQIEELKRQLEEESKAKNALAHALQSARHDCDLLREQYEEEQEAKAELQRAMSKANSEVAQWRTKYETDAIQRTEELEEAKKKLAQRLQDAEEHVEAVNSKCASLEKTKQRLQNEVEDLMIDVERSNAACAALDKKQRNFDKVLAEWKQKYEETQAELEASQKESRSLSTELFKVKNAYEESLDQLETLKRENKNLQQEISDLTEQIAEGGKHIHELEKIKKQIDQEKSELQASLEEAEASLEHEEGKILRIQLELNQVKSEIDRKIAEKDEEIDQLKRNHLRVVESMQSTLDAEIRSRNDALRIKKKMEGDLNEMEIQLNHANRQAAEAIRNLRNTQGMLKDTQLHLDDALRGQDDLKEQLAMVERRANLMQAEIEELRASLEQTERSRRVAEQELLDASERVQLLHTQNTSLINTKKKLETDISQIQGEMEDIVQEARNAEEKAKKAITDAAMMAEELKKEQDTSAHLERMKKNMEQTVKDLQHRLDEAEQLALKGGKKQIQKLEARVRELENEVENEQKRNIEAVKGLRKHERRVKELTYQTEEDRKNVLRLQDLVDKLQTKVKAYKRQAEEAEEQSNVNLAKFRKIQHELEEAEERADIAESQVNKLRVKSREVHTKVISEE.

The Myosin N-terminal SH3-like domain maps to 33–82 (DAKSSVFVVDAKESYVKATVQSREGGKVTAKTEGGATVTVKDDQVFSMNP). Serine 36 bears the Phosphoserine mark. Residues threonine 64 and threonine 69 each carry the phosphothreonine modification. Serine 79 is modified (phosphoserine). One can recognise a Myosin motor domain in the interval 86-782 (DKIEDMAMMT…LLGTLEEMRD (697 aa)). At lysine 130 the chain carries N6,N6,N6-trimethyllysine. Residue 179–186 (GESGAGKT) participates in ATP binding. Tyrosine 389 bears the Phosphotyrosine mark. Residue threonine 391 is modified to Phosphothreonine. Position 392 is a phosphoserine (serine 392). Threonine 419 bears the Phosphothreonine mark. Position 424 is a phosphotyrosine (tyrosine 424). Position 625 is a phosphoserine (serine 625). Residues 659 to 681 (LNKLMTNLKSTHPHFVRCLIPNE) form an actin-binding region. Histidine 757 carries the post-translational modification Pros-methylhistidine. The interval 761–775 (KFGHTKVFFKAGLLG) is actin-binding. Threonine 776 bears the Phosphothreonine mark. The region spanning 785 to 814 (LAQLITRTQAVCRGYLMRVEFKKMMERRES) is the IQ domain. The stretch at 843-1939 (LLKSAETEKE…EVHTKVISEE (1097 aa)) forms a coiled coil. Phosphoserine is present on residues serine 1092 and serine 1096. Disordered regions lie at residues 1128 to 1147 (AERASRAKAEKQRSDLSREL) and 1153 to 1172 (RLEEAGGATSAQIEMNKKRE). 2 positions are modified to phosphoserine: serine 1162 and serine 1237. Threonine 1241 is modified (phosphothreonine). Serine 1243 is modified (phosphoserine). Threonine 1255 bears the Phosphothreonine mark. Serine 1261 bears the Phosphoserine mark. Threonine 1265 carries the post-translational modification Phosphothreonine. Residues 1276–1299 (ELSTQKARLHTESGEFSRQLDEKD) are disordered. The residue at position 1278 (serine 1278) is a Phosphoserine. Basic and acidic residues predominate over residues 1284-1299 (LHTESGEFSRQLDEKD). Threonine 1286 bears the Phosphothreonine mark. Serine 1288, serine 1292, serine 1303, serine 1306, and serine 1413 each carry phosphoserine. Tyrosine 1464 is modified (phosphotyrosine). At threonine 1467 the chain carries Phosphothreonine. The residue at position 1474 (serine 1474) is a Phosphoserine. Tyrosine 1492 bears the Phosphotyrosine mark. At serine 1495 the chain carries Phosphoserine. Threonine 1501 carries the phosphothreonine modification. Phosphoserine is present on serine 1514. The residue at position 1517 (threonine 1517) is a Phosphothreonine. Phosphoserine is present on residues serine 1542, serine 1547, serine 1554, serine 1574, serine 1600, serine 1603, serine 1714, and serine 1726. A phosphothreonine mark is found at threonine 1730 and threonine 1736. Serine 1739 is modified (phosphoserine).

Belongs to the TRAFAC class myosin-kinesin ATPase superfamily. Myosin family. In terms of assembly, muscle myosin is a hexameric protein that consists of 2 heavy chain subunits (MHC), 2 alkali light chain subunits (MLC) and 2 regulatory light chain subunits (MLC-2). As to expression, expressed in type 2b myofibers in the tibialis anterior muscle (at protein level).

It localises to the cytoplasm. The protein resides in the myofibril. Its function is as follows. Muscle contraction. The protein is Myosin-4 (Myh4) of Mus musculus (Mouse).